The following is a 279-amino-acid chain: Putative pyruvate, phosphate dikinase regulatory protein (279 aa).

Gly157 to Thr164 provides a ligand contact to ADP.

This sequence belongs to the pyruvate, phosphate/water dikinase regulatory protein family. PDRP subfamily.

The enzyme catalyses N(tele)-phospho-L-histidyl/L-threonyl-[pyruvate, phosphate dikinase] + ADP = N(tele)-phospho-L-histidyl/O-phospho-L-threonyl-[pyruvate, phosphate dikinase] + AMP + H(+). It catalyses the reaction N(tele)-phospho-L-histidyl/O-phospho-L-threonyl-[pyruvate, phosphate dikinase] + phosphate + H(+) = N(tele)-phospho-L-histidyl/L-threonyl-[pyruvate, phosphate dikinase] + diphosphate. Its function is as follows. Bifunctional serine/threonine kinase and phosphorylase involved in the regulation of the pyruvate, phosphate dikinase (PPDK) by catalyzing its phosphorylation/dephosphorylation. The chain is Putative pyruvate, phosphate dikinase regulatory protein from Lactobacillus helveticus (strain DPC 4571).